We begin with the raw amino-acid sequence, 348 residues long: Phosphoribosylformylglycinamidine cyclo-ligase (348 aa).

This sequence belongs to the AIR synthase family.

It is found in the cytoplasm. It catalyses the reaction 2-formamido-N(1)-(5-O-phospho-beta-D-ribosyl)acetamidine + ATP = 5-amino-1-(5-phospho-beta-D-ribosyl)imidazole + ADP + phosphate + H(+). The protein operates within purine metabolism; IMP biosynthesis via de novo pathway; 5-amino-1-(5-phospho-D-ribosyl)imidazole from N(2)-formyl-N(1)-(5-phospho-D-ribosyl)glycinamide: step 2/2. This chain is Phosphoribosylformylglycinamidine cyclo-ligase, found in Geotalea daltonii (strain DSM 22248 / JCM 15807 / FRC-32) (Geobacter daltonii).